The following is a 315-amino-acid chain: Methionyl-tRNA formyltransferase (315 aa).

A (6S)-5,6,7,8-tetrahydrofolate-binding site is contributed by 107–110 (SLLP).

This sequence belongs to the Fmt family.

It carries out the reaction L-methionyl-tRNA(fMet) + (6R)-10-formyltetrahydrofolate = N-formyl-L-methionyl-tRNA(fMet) + (6S)-5,6,7,8-tetrahydrofolate + H(+). Its function is as follows. Attaches a formyl group to the free amino group of methionyl-tRNA(fMet). The formyl group appears to play a dual role in the initiator identity of N-formylmethionyl-tRNA by promoting its recognition by IF2 and preventing the misappropriation of this tRNA by the elongation apparatus. This is Methionyl-tRNA formyltransferase from Borreliella afzelii (strain PKo) (Borrelia afzelii).